The primary structure comprises 455 residues: Exodeoxyribonuclease 7 large subunit (455 aa).

This sequence belongs to the XseA family. As to quaternary structure, heterooligomer composed of large and small subunits.

It localises to the cytoplasm. The catalysed reaction is Exonucleolytic cleavage in either 5'- to 3'- or 3'- to 5'-direction to yield nucleoside 5'-phosphates.. Its function is as follows. Bidirectionally degrades single-stranded DNA into large acid-insoluble oligonucleotides, which are then degraded further into small acid-soluble oligonucleotides. The polypeptide is Exodeoxyribonuclease 7 large subunit (Escherichia coli (strain SMS-3-5 / SECEC)).